Reading from the N-terminus, the 103-residue chain is Large ribosomal subunit protein uL24 (103 aa).

This sequence belongs to the universal ribosomal protein uL24 family. In terms of assembly, part of the 50S ribosomal subunit.

Its function is as follows. One of two assembly initiator proteins, it binds directly to the 5'-end of the 23S rRNA, where it nucleates assembly of the 50S subunit. Functionally, one of the proteins that surrounds the polypeptide exit tunnel on the outside of the subunit. This is Large ribosomal subunit protein uL24 from Pediococcus pentosaceus (strain ATCC 25745 / CCUG 21536 / LMG 10740 / 183-1w).